A 1072-amino-acid polypeptide reads, in one-letter code: Rho family-interacting cell polarization regulator 2 (1072 aa).

Positions 83 to 112 (NGLDEYLEVHQTELDKLTAQLKDMRRNSRL) form a coiled coil. Residues 173–470 (RESLTEINRS…ATTATQHRAR (298 aa)) are necessary for interaction with NCAM and myoblast protrusion formation. 2 disordered regions span residues 439 to 465 (DRVPPANSAEPSSAHVTSSPDIATTAT) and 683 to 718 (EVEKNSYRTEHPEARGHLQRSLTEDTGVGTSVAGSP). Residues 447–460 (AEPSSAHVTSSPDI) show a composition bias toward polar residues. Basic and acidic residues predominate over residues 683 to 698 (EVEKNSYRTEHPEARG).

Belongs to the RIPOR family. In terms of assembly, homooligomer; homooligomerization is regulated by RHOC and leads to the formation of concatemers through the association of N- and C-termini. Interacts with NCAM; this interaction is necessary for myoblast protrusion formation. In terms of tissue distribution, expressed in myoblast and myotubes (at protein level). Expressed in brain, eyes and skeletal muscle.

The protein localises to the cytoplasm. Its subcellular location is the cytoskeleton. It localises to the cell projection. The protein resides in the filopodium. It is found in the apical cell membrane. The protein localises to the stereocilium. Its subcellular location is the stereocilium membrane. Acts as an inhibitor of the small GTPase RHOA and plays several roles in the regulation of myoblast and hair cell differentiation, lymphocyte T proliferation and neutrophil polarization. Plays a role in fetal mononuclear myoblast differentiation by promoting filopodia and myotube formation. Maintains naive T lymphocytes in a quiescent state and prevents chemokine-induced T lymphocyte responses, such as cell adhesion, polarization and migration. Involved also in the regulation of neutrophil polarization, chemotaxis and adhesion. Required for normal development of inner and outer hair cell stereocilia within the cochlea of the inner ear. Plays a role for maintaining the structural organization of the basal domain of stereocilia. Involved in mechanosensory hair cell function. Required for normal hearing. This is Rho family-interacting cell polarization regulator 2 from Coturnix japonica (Japanese quail).